Consider the following 271-residue polypeptide: Membrane protein insertase YidC 1 (271 aa).

The first 20 residues, 1 to 20 (MKKKLKTFSLILLTGSLLVA), serve as a signal peptide directing secretion. Residue Cys21 is the site of N-palmitoyl cysteine attachment. Cys21 carries S-diacylglycerol cysteine lipidation. Helical transmembrane passes span 45–65 (IQWLSFNHSIGLGIILFTLII), 124–144 (YASVLPLLIQLPVLWALFQAL), 163–183 (PDPYYILPVLAALFTFLSTWL), and 201–221 (VMPFIILVTSFNFASGVVLYW).

It belongs to the OXA1/ALB3/YidC family. Type 2 subfamily.

Its subcellular location is the cell membrane. Required for the insertion and/or proper folding and/or complex formation of integral membrane proteins into the membrane. Involved in integration of membrane proteins that insert both dependently and independently of the Sec translocase complex, as well as at least some lipoproteins. This chain is Membrane protein insertase YidC 1, found in Streptococcus agalactiae serotype V (strain ATCC BAA-611 / 2603 V/R).